Here is a 224-residue protein sequence, read N- to C-terminus: Zinc finger C4H2 domain-containing protein (224 aa).

A coiled-coil region spans residues 12–97 (ENIKEIRNKT…NKLLESTRRL (86 aa)). 2 disordered regions span residues 166–185 (QAAR…QPPP) and 204–224 (PLCK…KPDE). The C4H2-type zinc finger occupies 189–206 (CLSCHQQIHRNAPICPLC). Positions 208 to 224 (AKSRSRNPKKPKRKPDE) are enriched in basic residues.

The protein resides in the nucleus. It is found in the cytoplasm. It localises to the postsynaptic cell membrane. Functionally, plays a role in GABAergic and V2 interneurons differentiation. Involved in motoneuron development and in neuromuscular junction formation. The sequence is that of Zinc finger C4H2 domain-containing protein (zc4h2) from Danio rerio (Zebrafish).